The sequence spans 460 residues: 2-methylcitrate synthase, mitochondrial (460 aa).

The transit peptide at 1–24 (MALPLRTARHASRLAQTIGRRGYA) directs the protein to the mitochondrion. Positions 69 and 187 each coordinate CoA. His264 is an oxaloacetate binding site. Leu299 provides a ligand contact to CoA. The active site involves His300. CoA-binding residues include Val341, Gly343, and Tyr344. 2 residues coordinate oxaloacetate: His346 and Arg355. Residue His346 is part of the active site. Residues Thr395, Lys396, and Asn401 each coordinate CoA. Asp403 is a catalytic residue. Positions 429 and 449 each coordinate oxaloacetate.

The protein belongs to the citrate synthase family. Homodimer.

The protein localises to the mitochondrion matrix. It catalyses the reaction propanoyl-CoA + oxaloacetate + H2O = (2S,3S)-2-methylcitrate + CoA + H(+). The catalysed reaction is oxaloacetate + acetyl-CoA + H2O = citrate + CoA + H(+). It functions in the pathway organic acid metabolism; propanoate degradation. Partially inhibited by ATP. Its function is as follows. Catalyzes the synthesis of (2S,3S)-2-methylcitrate from propionyl-CoA and oxaloacetate and also from acetyl-CoA and oxaloacetate with a greater efficiency. Also has citrate synthase activity and can substitute for the loss of citA activity. The chain is 2-methylcitrate synthase, mitochondrial from Emericella nidulans (strain FGSC A4 / ATCC 38163 / CBS 112.46 / NRRL 194 / M139) (Aspergillus nidulans).